Consider the following 376-residue polypeptide: N-acetyldiaminopimelate deacetylase (376 aa).

Asp69 is a catalytic residue. Residue Glu128 is the Proton acceptor of the active site.

It belongs to the peptidase M20A family. N-acetyldiaminopimelate deacetylase subfamily.

The catalysed reaction is N-acetyl-(2S,6S)-2,6-diaminopimelate + H2O = (2S,6S)-2,6-diaminopimelate + acetate. Its pathway is amino-acid biosynthesis; L-lysine biosynthesis via DAP pathway; LL-2,6-diaminopimelate from (S)-tetrahydrodipicolinate (acetylase route): step 3/3. Catalyzes the conversion of N-acetyl-diaminopimelate to diaminopimelate and acetate. The protein is N-acetyldiaminopimelate deacetylase of Streptococcus pneumoniae (strain Taiwan19F-14).